A 168-amino-acid chain; its full sequence is 6,7-dimethyl-8-ribityllumazine synthase (168 aa).

Residues tryptophan 31, 65 to 67 (SFE), and 89 to 91 (CVV) contribute to the 5-amino-6-(D-ribitylamino)uracil site. A (2S)-2-hydroxy-3-oxobutyl phosphate-binding site is contributed by 94–95 (DT). Catalysis depends on histidine 97, which acts as the Proton donor. Tyrosine 122 contacts 5-amino-6-(D-ribitylamino)uracil. Residue arginine 136 coordinates (2S)-2-hydroxy-3-oxobutyl phosphate.

It belongs to the DMRL synthase family.

The catalysed reaction is (2S)-2-hydroxy-3-oxobutyl phosphate + 5-amino-6-(D-ribitylamino)uracil = 6,7-dimethyl-8-(1-D-ribityl)lumazine + phosphate + 2 H2O + H(+). Its pathway is cofactor biosynthesis; riboflavin biosynthesis; riboflavin from 2-hydroxy-3-oxobutyl phosphate and 5-amino-6-(D-ribitylamino)uracil: step 1/2. Catalyzes the formation of 6,7-dimethyl-8-ribityllumazine by condensation of 5-amino-6-(D-ribitylamino)uracil with 3,4-dihydroxy-2-butanone 4-phosphate. This is the penultimate step in the biosynthesis of riboflavin. The polypeptide is 6,7-dimethyl-8-ribityllumazine synthase (Phocaeicola vulgatus (strain ATCC 8482 / DSM 1447 / JCM 5826 / CCUG 4940 / NBRC 14291 / NCTC 11154) (Bacteroides vulgatus)).